The chain runs to 152 residues: Protein eva-1 homolog A (152 aa).

Positions 1-60 (MRLPLSHSPEHVEMALLSNILAAYSFVSENPERAALYFVSGVCIGLVLTLAALVIRISCH) are necessary for the localization and biological activity. Residues 35–55 (ALYFVSGVCIGLVLTLAALVI) traverse the membrane as a helical segment. The segment at 70 to 97 (KFLQDRESSSDSSDSEDGSEDTVSDLSV) is disordered. Acidic residues predominate over residues 82-92 (SDSEDGSEDTV). Threonine 106 carries the phosphothreonine modification. Serine 114 carries the phosphoserine; by FAM20C modification.

It belongs to the EVA1 family. In terms of tissue distribution, expressed in lung, kidney, liver, pancreas, placenta, but not in heart and skeletal muscle.

The protein localises to the endoplasmic reticulum membrane. The protein resides in the lysosome membrane. Its function is as follows. Acts as a regulator of programmed cell death, mediating both autophagy and apoptosis. The sequence is that of Protein eva-1 homolog A (EVA1A) from Homo sapiens (Human).